A 567-amino-acid chain; its full sequence is Urease subunit alpha (567 aa).

In terms of domain architecture, Urease spans 129–567 (GGIDSHIHFI…LPMAQRYFLF (439 aa)). The Ni(2+) site is built by His134, His136, and Lys217. Lys217 is modified (N6-carboxylysine). His219 is a binding site for substrate. Positions 246 and 272 each coordinate Ni(2+). Catalysis depends on His320, which acts as the Proton donor. Asp360 is a Ni(2+) binding site.

Belongs to the metallo-dependent hydrolases superfamily. Urease alpha subunit family. As to quaternary structure, heterotrimer of UreA (gamma), UreB (beta) and UreC (alpha) subunits. Three heterotrimers associate to form the active enzyme. Ni cation serves as cofactor. Post-translationally, carboxylation allows a single lysine to coordinate two nickel ions.

It is found in the cytoplasm. It catalyses the reaction urea + 2 H2O + H(+) = hydrogencarbonate + 2 NH4(+). The protein operates within nitrogen metabolism; urea degradation; CO(2) and NH(3) from urea (urease route): step 1/1. The protein is Urease subunit alpha of Alcanivorax borkumensis (strain ATCC 700651 / DSM 11573 / NCIMB 13689 / SK2).